A 495-amino-acid chain; its full sequence is Lysine--tRNA ligase (495 aa).

Positions 406 and 413 each coordinate Mg(2+).

The protein belongs to the class-II aminoacyl-tRNA synthetase family. Homodimer. It depends on Mg(2+) as a cofactor.

It localises to the cytoplasm. It carries out the reaction tRNA(Lys) + L-lysine + ATP = L-lysyl-tRNA(Lys) + AMP + diphosphate. The sequence is that of Lysine--tRNA ligase (lysS) from Staphylococcus aureus.